The sequence spans 320 residues: Apolipoprotein E (320 aa).

The N-terminal stretch at 1–18 (MKVLWAALLVAFLAGCQG) is a signal peptide. 8 consecutive repeat copies span residues 82–103 (ALMEETMKELKAYKSELEEQLS), 104–125 (PVAEETRARLSKELQAAQARLG), 126–147 (ADMEDVRSRLAQYRSEVQAMLG), 148–169 (QSTDELRARLASHLRKLRKRLL), 170–191 (RDVDDLQKRLAVYQAGAREGAE), 192–213 (RGVSAIRERLGTLVEQGRARAA), 214–236 (TVGSSLASQPLQERAQAWGERLR), and 237–258 (ARMEEVGSRTRDRLDEVKEQVE). The segment at 82–258 (ALMEETMKEL…RLDEVKEQVE (177 aa)) is 8 X 22 AA approximate tandem repeats. A Methionine sulfoxide modification is found at M145. At S149 the chain carries Phosphoserine. Residues 160 to 170 (HLRKLRKRLLR) form an LDL and other lipoprotein receptors binding region. 164-167 (LRKR) is a heparin binding site. The tract at residues 212 to 293 (AATVGSSLAS…SWFEPLVEDM (82 aa)) is lipid-binding and lipoprotein association. Residue T214 is glycosylated (O-linked (GalNAc...) threonine). 232-239 (GERLRARM) lines the heparin pocket. Residues 269–320 (QQMRLQAEAFQARLKSWFEPLVEDMQRQWAGLVEKVQAAVGASTTPVPSDNH) are homooligomerization. Residues 281–293 (RLKSWFEPLVEDM) are specificity for association with VLDL.

This sequence belongs to the apolipoprotein A1/A4/E family. As to quaternary structure, homotetramer. May interact with ABCA1; functionally associated with ABCA1 in the biogenesis of HDLs. May interact with APP/A4 amyloid-beta peptide; the interaction is extremely stable in vitro but its physiological significance is unclear. May interact with MAPT. May interact with MAP2. In the cerebrospinal fluid, interacts with secreted SORL1. Interacts with PMEL; this allows the loading of PMEL luminal fragment on ILVs to induce fibril nucleation. In terms of processing, APOE exists as multiple glycosylated and sialylated glycoforms within cells and in plasma. The extent of glycosylation and sialylation are tissue and context specific. Glycated in plasma VLDL. Post-translationally, phosphorylated by FAM20C in the extracellular medium.

It localises to the secreted. Its subcellular location is the extracellular space. The protein resides in the extracellular matrix. It is found in the extracellular vesicle. The protein localises to the endosome. It localises to the multivesicular body. Its function is as follows. APOE is an apolipoprotein, a protein associating with lipid particles, that mainly functions in lipoprotein-mediated lipid transport between organs via the plasma and interstitial fluids. APOE is a core component of plasma lipoproteins and is involved in their production, conversion and clearance. Apolipoproteins are amphipathic molecules that interact both with lipids of the lipoprotein particle core and the aqueous environment of the plasma. As such, APOE associates with chylomicrons, chylomicron remnants, very low density lipoproteins (VLDL) and intermediate density lipoproteins (IDL) but shows a preferential binding to high-density lipoproteins (HDL). It also binds a wide range of cellular receptors including the LDL receptor/LDLR, the LDL receptor-related proteins LRP1, LRP2 and LRP8 and the very low-density lipoprotein receptor/VLDLR that mediate the cellular uptake of the APOE-containing lipoprotein particles. Finally, APOE also has a heparin-binding activity and binds heparan-sulfate proteoglycans on the surface of cells, a property that supports the capture and the receptor-mediated uptake of APOE-containing lipoproteins by cells. A main function of APOE is to mediate lipoprotein clearance through the uptake of chylomicrons, VLDLs, and HDLs by hepatocytes. APOE is also involved in the biosynthesis by the liver of VLDLs as well as their uptake by peripheral tissues ensuring the delivery of triglycerides and energy storage in muscle, heart and adipose tissues. By participating in the lipoprotein-mediated distribution of lipids among tissues, APOE plays a critical role in plasma and tissues lipid homeostasis. APOE is also involved in two steps of reverse cholesterol transport, the HDLs-mediated transport of cholesterol from peripheral tissues to the liver, and thereby plays an important role in cholesterol homeostasis. First, it is functionally associated with ABCA1 in the biogenesis of HDLs in tissues. Second, it is enriched in circulating HDLs and mediates their uptake by hepatocytes. APOE also plays an important role in lipid transport in the central nervous system, regulating neuron survival and sprouting. This chain is Apolipoprotein E (APOE), found in Cebus capucinus (White-faced sapajou).